The chain runs to 316 residues: Methionyl-tRNA formyltransferase (316 aa).

Residue 112 to 115 (SLLP) participates in (6S)-5,6,7,8-tetrahydrofolate binding.

The protein belongs to the Fmt family.

It carries out the reaction L-methionyl-tRNA(fMet) + (6R)-10-formyltetrahydrofolate = N-formyl-L-methionyl-tRNA(fMet) + (6S)-5,6,7,8-tetrahydrofolate + H(+). In terms of biological role, attaches a formyl group to the free amino group of methionyl-tRNA(fMet). The formyl group appears to play a dual role in the initiator identity of N-formylmethionyl-tRNA by promoting its recognition by IF2 and preventing the misappropriation of this tRNA by the elongation apparatus. This chain is Methionyl-tRNA formyltransferase, found in Haemophilus ducreyi (strain 35000HP / ATCC 700724).